Reading from the N-terminus, the 202-residue chain is Dephospho-CoA kinase (202 aa).

In terms of domain architecture, DPCK spans 6 to 202; that stretch reads KISVTGDPSS…QCFKALKGTI (197 aa). Residue 14 to 19 participates in ATP binding; sequence SSGKTE.

Belongs to the CoaE family.

The protein resides in the cytoplasm. The catalysed reaction is 3'-dephospho-CoA + ATP = ADP + CoA + H(+). The protein operates within cofactor biosynthesis; coenzyme A biosynthesis; CoA from (R)-pantothenate: step 5/5. Functionally, catalyzes the phosphorylation of the 3'-hydroxyl group of dephosphocoenzyme A to form coenzyme A. The polypeptide is Dephospho-CoA kinase (Chlamydia muridarum (strain MoPn / Nigg)).